Here is a 121-residue protein sequence, read N- to C-terminus: Small ribosomal subunit protein uS13 (121 aa).

A disordered region spans residues 94–121; that stretch reads GLPVRGQKTRNNAHTVKGKPKAIAGKKK. Over residues 109-121 the composition is skewed to basic residues; sequence VKGKPKAIAGKKK.

It belongs to the universal ribosomal protein uS13 family. In terms of assembly, part of the 30S ribosomal subunit. Forms a loose heterodimer with protein S19. Forms two bridges to the 50S subunit in the 70S ribosome.

Functionally, located at the top of the head of the 30S subunit, it contacts several helices of the 16S rRNA. In the 70S ribosome it contacts the 23S rRNA (bridge B1a) and protein L5 of the 50S subunit (bridge B1b), connecting the 2 subunits; these bridges are implicated in subunit movement. Contacts the tRNAs in the A and P-sites. This Onion yellows phytoplasma (strain OY-M) protein is Small ribosomal subunit protein uS13.